We begin with the raw amino-acid sequence, 1817 residues long: Nuclear pore complex protein Nup98-Nup96 (1817 aa).

Residues 1-156 are FG repeats 1; the sequence is MFNKSFGTPF…LFGPSSFTAA (156 aa). The GLEBS; interaction with RAE1 stretch occupies residues 157–213; sequence PTGTTIKFNPPTGTDTMVKAGVSTNISTKHQCITAMKEYESKSLEELRLEDYQANRK. An FG repeats 2 region spans residues 214-480; it reads GPQNQVGAGT…NTTTATLGFG (267 aa). A disordered region spans residues 512–535; that stretch reads PFGDSPLFRNPMSDPKKKEERLKP. Ser524 carries the phosphoserine modification. Basic and acidic residues predominate over residues 525–534; that stretch reads DPKKKEERLK. Lys563 participates in a covalent cross-link: Glycyl lysine isopeptide (Lys-Gly) (interchain with G-Cter in SUMO2). The residue at position 603 (Lys603) is an N6-acetyllysine; alternate. Lys603 is covalently cross-linked (Glycyl lysine isopeptide (Lys-Gly) (interchain with G-Cter in SUMO2); alternate). 6 positions are modified to phosphoserine: Ser608, Ser612, Ser618, Ser623, Ser625, and Ser653. The segment at 614 to 633 is disordered; it reads VNRDSENLASPSEYPENGER. The tract at residues 662–682 is disordered; it reads PIAKPIPQTPESAGNKHSNSN. Lys665 is covalently cross-linked (Glycyl lysine isopeptide (Lys-Gly) (interchain with G-Cter in SUMO2)). Position 670 is a phosphothreonine (Thr670). A compositionally biased stretch (polar residues) spans 670–682; sequence TPESAGNKHSNSN. Phosphoserine is present on residues Ser673, Ser681, Ser683, and Ser839. Positions 738–880 constitute a Peptidase S59 domain; it reads KVGYYTIPSM…GSWVFKVSHF (143 aa). Residue Ser881 is the Nucleophile of the active site. Residues 886-937 form a disordered region; it reads QDSDEEEEEHPSKTSTKKLKTAPLPPASQTTPLQMALNGKPAPPPQSQSPEV. 3 positions are modified to phosphoserine: Ser888, Ser897, and Ser934. Phosphothreonine is present on Thr1000. Phosphoserine occurs at positions 1023, 1028, 1043, 1060, and 1064. Thr1070 is subject to Phosphothreonine. Ser1329 carries the phosphoserine modification. At Thr1772 the chain carries Phosphothreonine.

It belongs to the nucleoporin GLFG family. In terms of assembly, part of the nuclear pore complex (NPC). Interacts directly with NUP96. Part of the Nup160 subcomplex in the nuclear pore which is composed of NUP160, NUP133, NUP107 and NUP96; this complex plays a role in RNA export and in tethering NUP98 and NUP153 to the nucleus. Interacts with RAE1. Does not interact with TPR. Interacts with NUP88. Interacts directly with NUP88 and NUP214, subunits of the cytoplasmic filaments of the NPC. Interacts (via N-terminus) with DHX9 (via DRBM, OB-fold and RGG domains); this interaction occurs in a RNA-dependent manner and stimulates DHX9-mediated ATPase activity. As to quaternary structure, (Microbial infection) Interacts with HIV-1 capsid protein P24 and nucleocapsid protein P7 (in vitro); the interaction may promote the integration of the virus in the host nucleus (in vitro). (Microbial infection) Interacts with vesicular stomatitis virus protein M. In terms of assembly, (Microbial infection) Interacts with SARS coronavirus-2/SARS-CoV-2 ORF6 protein; the interaction blocks STAT1 nuclear translocation, antagonizes interferon signaling and blocks mRNA nuclear export (ex vivo). As to quaternary structure, (Microbial infection) Interacts with SARS coronavirus/SARS-CoV ORF6 protein. In terms of processing, isoform 1 to isoform 4 are autoproteolytically cleaved to yield Nup98 and Nup96 or Nup98 only, respectively. Cleaved Nup98 is necessary for the targeting of Nup98 to the nuclear pore and the interaction with Nup96. Post-translationally, proteolytically degraded after poliovirus (PV) infection; degradation is partial and NCP- and TPR-binding domains withstand degradation.

It localises to the nucleus membrane. The protein localises to the nucleus. It is found in the nuclear pore complex. Its subcellular location is the nucleoplasm. In terms of biological role, plays a role in the nuclear pore complex (NPC) assembly and/or maintenance. NUP98 and NUP96 are involved in the bidirectional transport across the NPC. May anchor NUP153 and TPR to the NPC. In cooperation with DHX9, plays a role in transcription and alternative splicing activation of a subset of genes. Involved in the localization of DHX9 in discrete intranuclear foci (GLFG-body). Functionally, (Microbial infection) Interacts with HIV-1 capsid protein P24 and nucleocapsid protein P7 and may thereby promote the integration of the virus in the host nucleus (in vitro). Binding affinity to HIV-1 CA-NC complexes bearing the capsid change Asn-74-Asp is reduced (in vitro). This chain is Nuclear pore complex protein Nup98-Nup96, found in Homo sapiens (Human).